The following is a 104-amino-acid chain: Large ribosomal subunit protein uL23 (104 aa).

The protein belongs to the universal ribosomal protein uL23 family. As to quaternary structure, part of the 50S ribosomal subunit. Contacts protein L29, and trigger factor when it is bound to the ribosome.

One of the early assembly proteins it binds 23S rRNA. One of the proteins that surrounds the polypeptide exit tunnel on the outside of the ribosome. Forms the main docking site for trigger factor binding to the ribosome. The chain is Large ribosomal subunit protein uL23 from Paraburkholderia phymatum (strain DSM 17167 / CIP 108236 / LMG 21445 / STM815) (Burkholderia phymatum).